Consider the following 325-residue polypeptide: Lipoyl synthase (325 aa).

The interval 1–32 is disordered; the sequence is MPPLADASTETLSPAEQAAVRHPEKAHRPDQP. Residues 19–32 are compositionally biased toward basic and acidic residues; sequence AVRHPEKAHRPDQP. Cysteine 66, cysteine 71, cysteine 77, cysteine 92, cysteine 96, cysteine 99, and serine 305 together coordinate [4Fe-4S] cluster. The Radical SAM core domain maps to 78 to 294; that stretch reads WAKKHATFMI…AEVANAKGFL (217 aa).

It belongs to the radical SAM superfamily. Lipoyl synthase family. The cofactor is [4Fe-4S] cluster.

The protein resides in the cytoplasm. It carries out the reaction [[Fe-S] cluster scaffold protein carrying a second [4Fe-4S](2+) cluster] + N(6)-octanoyl-L-lysyl-[protein] + 2 oxidized [2Fe-2S]-[ferredoxin] + 2 S-adenosyl-L-methionine + 4 H(+) = [[Fe-S] cluster scaffold protein] + N(6)-[(R)-dihydrolipoyl]-L-lysyl-[protein] + 4 Fe(3+) + 2 hydrogen sulfide + 2 5'-deoxyadenosine + 2 L-methionine + 2 reduced [2Fe-2S]-[ferredoxin]. Its pathway is protein modification; protein lipoylation via endogenous pathway; protein N(6)-(lipoyl)lysine from octanoyl-[acyl-carrier-protein]: step 2/2. Catalyzes the radical-mediated insertion of two sulfur atoms into the C-6 and C-8 positions of the octanoyl moiety bound to the lipoyl domains of lipoate-dependent enzymes, thereby converting the octanoylated domains into lipoylated derivatives. The protein is Lipoyl synthase of Beijerinckia indica subsp. indica (strain ATCC 9039 / DSM 1715 / NCIMB 8712).